The primary structure comprises 195 residues: Cysteine/O-acetylserine efflux protein (195 aa).

The Periplasmic segment spans residues 1–7 (MTPTLLS). Residues 8-28 (AFWTYTLITAMTPGPNNILAL) form a helical membrane-spanning segment. The Cytoplasmic portion of the chain corresponds to 29 to 46 (SSATSHGFRQSTRVLAGM). The helical transmembrane segment at 47–67 (SLGFLIVMLLCAGISFSLAVI) threads the bilayer. At 68–69 (DP) the chain is on the periplasmic side. A helical membrane pass occupies residues 70 to 90 (AAVHLLSWAGAAYIVWLAWKI). The Cytoplasmic segment spans residues 91 to 104 (ATSPTKEDGLQAKP). Residues 105-125 (ISFWASFALQFVNVKIILYGV) form a helical membrane-spanning segment. The Periplasmic segment spans residues 126–141 (TALSTFVLPQTQALSW). Residues 142–162 (VVGVSVLLAMIGTFGNVCWAL) traverse the membrane as a helical segment. Topologically, residues 163–176 (AGHLFQRLFRQYGR) are cytoplasmic. The helical transmembrane segment at 177–194 (QLNIVLALLLVYCAVRIF) threads the bilayer. Tyrosine 195 is a topological domain (periplasmic).

It belongs to the Rht family.

The protein resides in the cell inner membrane. It carries out the reaction O-acetyl-L-serine(in) = O-acetyl-L-serine(out). The enzyme catalyses L-cysteine(in) = L-cysteine(out). Exporter of O-acetylserine (OAS) and cysteine. The sequence is that of Cysteine/O-acetylserine efflux protein (eamB) from Escherichia coli O9:H4 (strain HS).